A 65-amino-acid polypeptide reads, in one-letter code: Muscarinic toxin-like protein 3 (65 aa).

4 disulfide bridges follow: Cys-3-Cys-24, Cys-17-Cys-41, Cys-45-Cys-57, and Cys-58-Cys-63.

Homodimer; non-covalently linked. In terms of tissue distribution, expressed by the venom gland.

It localises to the secreted. Functionally, antagonist of muscle and neuronal nicotinic acetylcholine receptors (nAChR) with highest affinity for neuronal alpha-7/CHRNA7 nAChRs. This chain is Muscarinic toxin-like protein 3, found in Naja kaouthia (Monocled cobra).